A 499-amino-acid chain; its full sequence is Putative sodium-dependent excitatory amino acid transporter glt-4 (499 aa).

Residues 1–7 are Cytoplasmic-facing; sequence MAKLSKE. Helical transmembrane passes span 8 to 28, 50 to 70, and 87 to 107; these read NLLLLFTVLGVVVGIGLGFSL, FVQMLKMLILPMIMSSIITSL, and IYYTLTTFFAVFLGIVLVSVI. A glycan (N-linked (GlcNAc...) asparagine) is linked at asparagine 165. The next 3 membrane-spanning stretches (helical) occupy residues 194-217, 227-254, and 276-297; these read VSDGMNILGLVVFSVALGIVIGVI, FFKSLEACSMKLIGWVIIYSPVGITFLI, and ITVILGLLIHAFVVIPLLCVVL. The discontinuously helical intramembrane region spans 303 to 333; it reads IKFVGGMAQALLTALATSSSSATLPLSIKCC. L-aspartate is bound at residue 320–322; that stretch reads SSS. The helical transmembrane segment at 343–369 threads the bilayer; that stretch reads VTRFVLPLGATINMDGTALYEAVAAIY. Residues glycine 351, threonine 353, and asparagine 355 each contribute to the Na(+) site. L-aspartate contacts are provided by residues threonine 359, 400-404, aspartate 433, and asparagine 440; that span reads IPQAG. The segment at residues 383 to 416 is an intramembrane region (discontinuously helical); the sequence is VVLVSLTATLASIGAAGIPQAGIVTMIMVLIAIG. A helical transmembrane segment spans residues 430-451; it reads FMLDRLRTTVNVHGDSIATAVI. Positions 440 and 444 each coordinate Na(+).

Belongs to the dicarboxylate/amino acid:cation symporter (DAACS) (TC 2.A.23) family.

The protein resides in the cell membrane. Its function is as follows. Sodium-dependent, high-affinity amino acid transporter that mediates the uptake of L-glutamate and also L-aspartate and D-aspartate. Functions as a symporter that transports one amino acid molecule together with two or three Na(+) ions and one proton, in parallel with the counter-transport of one K(+) ion. Mediates Cl(-) flux that is not coupled to amino acid transport; this avoids the accumulation of negative charges due to aspartate and Na(+) symport. In Caenorhabditis elegans, this protein is Putative sodium-dependent excitatory amino acid transporter glt-4 (glt-4).